We begin with the raw amino-acid sequence, 314 residues long: Taste receptor type 2 member 42 (314 aa).

Topologically, residues 1-7 are extracellular; sequence MATELDK. Residues 8–28 traverse the membrane as a helical segment; sequence IFLTLAIVEFIIGMLGNVFIG. The Cytoplasmic portion of the chain corresponds to 29–50; it reads LANCSEGIKNQKVFSVDFILTC. Residues 51 to 71 form a helical membrane-spanning segment; the sequence is LAISTIGHLLVILFDSHVAGL. Residues 72–101 are Extracellular-facing; sequence APHLYATDRVVRPVTVLWHMTNHLTTWLAT. The chain crosses the membrane as a helical span at residues 102-122; the sequence is CLSIFYFFKIAHFPHSLFLWL. At 123 to 127 the chain is on the cytoplasmic side; it reads RWRMN. A helical transmembrane segment spans residues 128-148; that stretch reads RVIAILLTLSLFLLIFDCLVL. Residues 149 to 187 lie on the Extracellular side of the membrane; the sequence is EMFIDISLNIIDKSNLTLYLDESKTPYDKLFLLKTLLSL. Residue Asn-163 is glycosylated (N-linked (GlcNAc...) asparagine). A helical transmembrane segment spans residues 188-208; that stretch reads NSFIPFSLCLTSLLFLFLSLV. The Cytoplasmic segment spans residues 209–238; sequence RHTRNLKLSSLGSRDSSTEAHRRAMKMVMS. A helical transmembrane segment spans residues 239–259; the sequence is FLFLFIVHFFSLQVANWTFCI. The Extracellular segment spans residues 260 to 265; that stretch reads LGNNKY. The helical transmembrane segment at 266 to 286 threads the bilayer; the sequence is TQFVMLALHAFPSCHSFILIL. The Cytoplasmic segment spans residues 287 to 314; the sequence is GNSKLRQTAVRLLWHLRNYTKRPNPLPL.

Belongs to the G-protein coupled receptor T2R family.

Its subcellular location is the membrane. Functionally, receptor that may play a role in the perception of bitterness and is gustducin-linked. May play a role in sensing the chemical composition of the gastrointestinal content. The activity of this receptor may stimulate alpha gustducin, mediate PLC-beta-2 activation and lead to the gating of TRPM5. This chain is Taste receptor type 2 member 42 (TAS2R42), found in Papio hamadryas (Hamadryas baboon).